The chain runs to 718 residues: uncharacterized protein (718 aa).

The next 6 membrane-spanning stretches (helical) occupy residues 9–29, 60–80, 83–103, 136–156, 391–411, and 506–526; these read VIST…IWFF, NVFF…LHIG, IQYI…GAVG, VMIL…YLFF, IVVF…GYWI, and LLDT…LWPD.

It belongs to the YccS/YhfK family.

It is found in the cell membrane. This is an uncharacterized protein from Haemophilus influenzae (strain ATCC 51907 / DSM 11121 / KW20 / Rd).